We begin with the raw amino-acid sequence, 830 residues long: Receptor-like protein kinase HERK 1 (830 aa).

The first 24 residues, 1–24 (MGIEKFETFILISTISILLCICHG), serve as a signal peptide directing secretion. At 25 to 405 (FTPVDNYLIN…SSSSSKSNLG (381 aa)) the chain is on the extracellular side. N40, N146, N217, N280, and N381 each carry an N-linked (GlcNAc...) asparagine glycan. The helical transmembrane segment at 406-426 (LIVGSAIGSLLAVVFLGSCFV) threads the bilayer. Over 427–830 (LYKKRKRGQD…FSQLVKSEGR (404 aa)) the chain is Cytoplasmic. Residues 485 to 758 (FDESRNIGVG…GDVLWNLEYA (274 aa)) form the Protein kinase domain. ATP-binding positions include 491-499 (IGVGGFGKV) and K513. D609 functions as the Proton acceptor in the catalytic mechanism.

Belongs to the protein kinase superfamily. Ser/Thr protein kinase family. Post-translationally, autophosphorylated. Expressed in most vegetative tissues, including leaves, stems and roots, especially in cell elongation regions.

The protein resides in the cell membrane. Receptor-like protein kinase required for cell elongation during vegetative growth, mostly in a brassinosteroid-(BR-) independent manner. The protein is Receptor-like protein kinase HERK 1 (HERK1) of Arabidopsis thaliana (Mouse-ear cress).